Consider the following 217-residue polypeptide: Large ribosomal subunit protein eL14 (217 aa).

Lys-79 is subject to N6-acetyllysine. Lys-85 is modified (N6-acetyllysine; alternate). Lys-85 carries the post-translational modification N6-succinyllysine; alternate. Residue Lys-124 forms a Glycyl lysine isopeptide (Lys-Gly) (interchain with G-Cter in SUMO2) linkage. Ser-139 carries the post-translational modification Phosphoserine. Positions 162–217 (KVPAKKATGPGKKAAGQKAPAQKAAGQKAAPPAKGQKGQKTPAQKAPAPKAAGKKA) are disordered. The stretch at 173–177 (KKAAG) is one 1-1; approximate repeat. The segment at 173–192 (KKAAGQKAPAQKAAGQKAAP) is 4 X 5 AA tandem repeats of Q-K-A-[APS]-X. 5 repeat units span residues 178–182 (QKAPA), 183–187 (QKAAG), 188–192 (QKAAP), 195–197 (KGQ), and 198–200 (KGQ). The 2 X 3 AA tandem repeats of K-G-Q stretch occupies residues 195–200 (KGQKGQ). Lys-206 is modified (N6-succinyllysine).

This sequence belongs to the eukaryotic ribosomal protein eL14 family. In terms of assembly, component of the large ribosomal subunit.

The protein localises to the cytoplasm. Its function is as follows. Component of the large ribosomal subunit. The ribosome is a large ribonucleoprotein complex responsible for the synthesis of proteins in the cell. This chain is Large ribosomal subunit protein eL14 (Rpl14), found in Mus musculus (Mouse).